The sequence spans 369 residues: Transforming protein Maf (369 aa).

Disordered stretches follow at residues 57–85 (STPMSTPCSSVPPSPSFSAPSPGSGTDQK) and 169–243 (GGAP…GLHF). Residues 173 to 183 (HYHHHHHHPHH) show a composition bias toward basic residues. The span at 184–193 (GGGGGGGGHP) shows a compositional bias: gly residues. The segment covering 194 to 211 (HGAAPGSAPPSSASSSAA) has biased composition (low complexity). Residues 212–226 (GSGGGGGGGGGGAGG) show a composition bias toward gly residues. The interval 274-299 (RLKQKRRTLKNRGYAQSCRFKRVQQR) is basic motif. The 64-residue stretch at 274–337 (RLKQKRRTLK…DAYKEKYEKL (64 aa)) folds into the bZIP domain. A leucine-zipper region spans residues 302-323 (LESEKNQLLQQVEHLKQEISRL). The tract at residues 341–369 (GFRENGSSSDNPSSPEFFMYPRESSTTVM) is disordered. Residues 345–354 (NGSSSDNPSS) show a composition bias toward polar residues.

Belongs to the bZIP family. Maf subfamily.

It is found in the host nucleus. In terms of biological role, might be a transcriptional trans-activator. This chain is Transforming protein Maf (V-MAF), found in Galliformes.